Reading from the N-terminus, the 396-residue chain is Elongation factor Tu (396 aa).

The tr-type G domain maps to 10-206 (KPHVNIGTIG…AVDESVPDPV (197 aa)). The interval 19-26 (GHVDHGKT) is G1. 19–26 (GHVDHGKT) is a binding site for GTP. Residue Thr-26 coordinates Mg(2+). Residues 62–66 (GITIN) are G2. Positions 83–86 (DAPG) are G3. Residues 83 to 87 (DAPGH) and 138 to 141 (NKSD) each bind GTP. Residues 138–141 (NKSD) are G4. The G5 stretch occupies residues 176-178 (SGL).

The protein belongs to the TRAFAC class translation factor GTPase superfamily. Classic translation factor GTPase family. EF-Tu/EF-1A subfamily. In terms of assembly, monomer.

It localises to the cytoplasm. It carries out the reaction GTP + H2O = GDP + phosphate + H(+). Its function is as follows. GTP hydrolase that promotes the GTP-dependent binding of aminoacyl-tRNA to the A-site of ribosomes during protein biosynthesis. The chain is Elongation factor Tu from Pseudarthrobacter chlorophenolicus (strain ATCC 700700 / DSM 12829 / CIP 107037 / JCM 12360 / KCTC 9906 / NCIMB 13794 / A6) (Arthrobacter chlorophenolicus).